The primary structure comprises 297 residues: 4-hydroxy-tetrahydrodipicolinate synthase (297 aa).

A pyruvate-binding site is contributed by Thr-47. The active-site Proton donor/acceptor is the Tyr-135. The Schiff-base intermediate with substrate role is filled by Lys-163. Ile-205 serves as a coordination point for pyruvate.

It belongs to the DapA family. In terms of assembly, homotetramer; dimer of dimers.

The protein localises to the cytoplasm. It carries out the reaction L-aspartate 4-semialdehyde + pyruvate = (2S,4S)-4-hydroxy-2,3,4,5-tetrahydrodipicolinate + H2O + H(+). Its pathway is amino-acid biosynthesis; L-lysine biosynthesis via DAP pathway; (S)-tetrahydrodipicolinate from L-aspartate: step 3/4. Functionally, catalyzes the condensation of (S)-aspartate-beta-semialdehyde [(S)-ASA] and pyruvate to 4-hydroxy-tetrahydrodipicolinate (HTPA). The chain is 4-hydroxy-tetrahydrodipicolinate synthase from Cytophaga hutchinsonii (strain ATCC 33406 / DSM 1761 / CIP 103989 / NBRC 15051 / NCIMB 9469 / D465).